The chain runs to 294 residues: UDP-3-O-acyl-N-acetylglucosamine deacetylase (294 aa).

Residues His-75, His-232, and Asp-236 each contribute to the Zn(2+) site. His-259 acts as the Proton donor in catalysis.

This sequence belongs to the LpxC family. It depends on Zn(2+) as a cofactor.

The enzyme catalyses a UDP-3-O-[(3R)-3-hydroxyacyl]-N-acetyl-alpha-D-glucosamine + H2O = a UDP-3-O-[(3R)-3-hydroxyacyl]-alpha-D-glucosamine + acetate. It functions in the pathway glycolipid biosynthesis; lipid IV(A) biosynthesis; lipid IV(A) from (3R)-3-hydroxytetradecanoyl-[acyl-carrier-protein] and UDP-N-acetyl-alpha-D-glucosamine: step 2/6. In terms of biological role, catalyzes the hydrolysis of UDP-3-O-myristoyl-N-acetylglucosamine to form UDP-3-O-myristoylglucosamine and acetate, the committed step in lipid A biosynthesis. This Campylobacter jejuni subsp. jejuni serotype O:2 (strain ATCC 700819 / NCTC 11168) protein is UDP-3-O-acyl-N-acetylglucosamine deacetylase.